The chain runs to 141 residues: Transcription antitermination protein NusB (141 aa).

This sequence belongs to the NusB family.

Functionally, involved in transcription antitermination. Required for transcription of ribosomal RNA (rRNA) genes. Binds specifically to the boxA antiterminator sequence of the ribosomal RNA (rrn) operons. The protein is Transcription antitermination protein NusB of Neisseria meningitidis serogroup C (strain 053442).